A 520-amino-acid chain; its full sequence is MSSTVWILISILLATVGAVVGFFVRKSIAEAKINGAANEAKRILDEANREAEALKKEALLEAKDEIHTLRTEAELEIRDRRSELQKQENRLMQKEENLDRKDETLDKREQQLEKKEDSLVARQQQIEELESKVGELVQKQQTELERISNLTREQAKAIILGKVESEVSHEIAVMVKESEVRAKEEADKKAKEILSLAMQRCAADHVAETTVSVVNLPNDEMKGRIIGREGRNIRTLETLTGIDLIIDDTPEAVILSGFDPIRRETARIALDKLVQDGRIHPARIEEMVEKSRREVDEYIREVGEQTTFEVGVHGLHPDLIKILGRLKYRTSYGQNVLKHSMEVAYLTGLMAAELGEDEKLARRAGLLHDIGKAIDHEVEGSHVEIGVELATKYKEHPVVINSIASHHGDTEPTSIIAVLVAAADALSAARPGARSETLENYIRRLEKLEEISESYEGVEKSFAIQAGREVRILVKPDTIDDLEAHRLARDIRKRIENELDYPGHIKVTVIRETRAVEYAK.

Residues 4–24 form a helical membrane-spanning segment; that stretch reads TVWILISILLATVGAVVGFFV. The segment at 86-116 is disordered; the sequence is KQENRLMQKEENLDRKDETLDKREQQLEKKE. The KH domain occupies 210–273; that stretch reads TVSVVNLPND…ETARIALDKL (64 aa). The region spanning 336–429 is the HD domain; sequence VLKHSMEVAY…VAAADALSAA (94 aa).

It belongs to the RNase Y family.

It localises to the cell membrane. Endoribonuclease that initiates mRNA decay. In Bacillus cereus (strain ATCC 10987 / NRS 248), this protein is Ribonuclease Y.